The primary structure comprises 235 residues: Lipoprotein-releasing system ATP-binding protein LolD (235 aa).

In terms of domain architecture, ABC transporter spans 5–235 (FALANIYKSF…SIDESGFNKI (231 aa)). 40 to 47 (GKSGSGKS) provides a ligand contact to ATP.

Belongs to the ABC transporter superfamily. Lipoprotein translocase (TC 3.A.1.125) family. As to quaternary structure, the complex is composed of two ATP-binding proteins (LolD) and two transmembrane proteins (LolC and LolE).

The protein resides in the cell inner membrane. Part of the ABC transporter complex LolCDE involved in the translocation of mature outer membrane-directed lipoproteins, from the inner membrane to the periplasmic chaperone, LolA. Responsible for the formation of the LolA-lipoprotein complex in an ATP-dependent manner. The polypeptide is Lipoprotein-releasing system ATP-binding protein LolD (Ehrlichia chaffeensis (strain ATCC CRL-10679 / Arkansas)).